The primary structure comprises 844 residues: Putative ubiquitin thioesterase 232R (844 aa).

Disordered stretches follow at residues 136–223 (NSST…DEAE), 261–287 (SRRKSPSPSPVPPSTRCDPTTTAPPME), 326–377 (LLNG…PELT), and 422–541 (QKKQ…KLSV). A compositionally biased stretch (low complexity) spans 137–216 (SSTRSRSPSV…PSRQSVRQSS (80 aa)). Low complexity-rich tracts occupy residues 332 to 341 (RPSPSLPQSR) and 354 to 364 (RSPSVGSPSVR). Residues 429-438 (SPSPTPPSPV) are compositionally biased toward pro residues. Positions 472 to 485 (VQKKMGKSGEREPK) are enriched in basic and acidic residues. Residues 504–518 (SLRSRLSTQQQTQQS) show a composition bias toward low complexity. The segment covering 526–535 (ESIKPEESVR) has biased composition (basic and acidic residues). Positions 590 to 725 (YTVKQVSGDG…NYHYTSLVPI (136 aa)) constitute an OTU domain. The active site involves Asp-598. The active-site Nucleophile is the Cys-601. His-718 is an active-site residue.

It catalyses the reaction Thiol-dependent hydrolysis of ester, thioester, amide, peptide and isopeptide bonds formed by the C-terminal Gly of ubiquitin (a 76-residue protein attached to proteins as an intracellular targeting signal).. Its function is as follows. Hydrolase that can remove conjugated ubiquitin from proteins and may therefore play an important regulatory role at the level of protein turnover by preventing degradation. This Aedes vexans (Inland floodwater mosquito) protein is Putative ubiquitin thioesterase 232R.